A 365-amino-acid polypeptide reads, in one-letter code: UBX domain-containing protein 2B (365 aa).

The segment at 1 to 97 (MADGGASPAQ…MSDDKENQRF (97 aa)) is disordered. Composition is skewed to basic and acidic residues over residues 50–63 (DEAK…DKPT) and 73–95 (LKID…KENQ). Positions 175–240 (DVQILLKLWR…MEDHQEQEYV (66 aa)) constitute an SEP domain. In terms of domain architecture, UBX spans 286 to 363 (DSVPATKIQI…DILNTVILQQ (78 aa)).

Belongs to the NSFL1C family.

Its subcellular location is the nucleus. The protein resides in the cytoplasm. The protein localises to the cytosol. It is found in the endoplasmic reticulum. It localises to the golgi apparatus. Its subcellular location is the cytoskeleton. The protein resides in the microtubule organizing center. The protein localises to the centrosome. Adapter protein required for Golgi and endoplasmic reticulum biogenesis. Involved in Golgi and endoplasmic reticulum maintenance during interphase and in their reassembly at the end of mitosis. Regulates the centrosomal levels of kinase AURKA/Aurora A during mitotic progression by promoting AURKA removal from centrosomes in prophase. Also, regulates spindle orientation during mitosis. The protein is UBX domain-containing protein 2B (UBXN2B) of Gallus gallus (Chicken).